We begin with the raw amino-acid sequence, 245 residues long: Uridylate kinase (245 aa).

20-23 (KLSG) contributes to the ATP binding site. G60 is a binding site for UMP. The ATP site is built by G61 and R65. UMP is bound by residues D80 and 141-148 (AGLPYFST). 2 residues coordinate ATP: Y175 and D178.

This sequence belongs to the UMP kinase family. In terms of assembly, homohexamer.

It is found in the cytoplasm. The catalysed reaction is UMP + ATP = UDP + ADP. Its pathway is pyrimidine metabolism; CTP biosynthesis via de novo pathway; UDP from UMP (UMPK route): step 1/1. Its activity is regulated as follows. Inhibited by UTP. Its function is as follows. Catalyzes the reversible phosphorylation of UMP to UDP. This Paenarthrobacter aurescens (strain TC1) protein is Uridylate kinase.